A 119-amino-acid chain; its full sequence is BLOC-1-related complex subunit 8 (119 aa).

A Phosphoserine modification is found at S109.

The protein belongs to the BORCS8 family. Component of the BLOC-one-related complex (BORC) which is composed of BLOC1S1, BLOC1S2, BORCS5, BORCS6, BORCS7, BORCS8, KXD1 and SNAPIN.

Its subcellular location is the lysosome membrane. Functionally, as part of the BLOC-one-related complex (BORC), it plays a role in the movement and localization of lysosomes at the cell periphery. Associated with the cytosolic face of lysosomes, BORC recruits ARL8B to the lysosomal membrane and couples lysosomes to microtubule plus-end-directed kinesin motors, driving lysosome movement toward the cell periphery. This Homo sapiens (Human) protein is BLOC-1-related complex subunit 8.